The sequence spans 392 residues: Tryptophan synthase beta chain 1 (392 aa).

An N6-(pyridoxal phosphate)lysine modification is found at lysine 85.

Belongs to the TrpB family. As to quaternary structure, tetramer of two alpha and two beta chains. Requires pyridoxal 5'-phosphate as cofactor.

The enzyme catalyses (1S,2R)-1-C-(indol-3-yl)glycerol 3-phosphate + L-serine = D-glyceraldehyde 3-phosphate + L-tryptophan + H2O. It participates in amino-acid biosynthesis; L-tryptophan biosynthesis; L-tryptophan from chorismate: step 5/5. In terms of biological role, the beta subunit is responsible for the synthesis of L-tryptophan from indole and L-serine. The sequence is that of Tryptophan synthase beta chain 1 (trpB1) from Methanothermobacter thermautotrophicus (strain ATCC 29096 / DSM 1053 / JCM 10044 / NBRC 100330 / Delta H) (Methanobacterium thermoautotrophicum).